The chain runs to 184 residues: UPF0397 protein SA2477 (184 aa).

Transmembrane regions (helical) follow at residues 11-31 (VVAI…VVIP), 44-64 (AFLA…TGLV), 77-97 (AWWS…WIGL), 111-131 (MIYF…LIAP), and 148-168 (QGVI…TILL).

Belongs to the UPF0397 family.

It is found in the cell membrane. This is UPF0397 protein SA2477 from Staphylococcus aureus (strain N315).